The following is a 310-amino-acid chain: AA9 family lytic polysaccharide monooxygenase A (310 aa).

Residues Met1–Gly21 form the signal peptide. His22 and His107 together coordinate Cu(2+). Disulfide bonds link Cys77/Cys199 and Cys118/Cys122. N-linked (GlcNAc...) asparagine glycans are attached at residues Asn121 and Asn159. His185 contacts O2. Tyr196 lines the Cu(2+) pocket.

It belongs to the polysaccharide monooxygenase AA9 family. Cu(2+) serves as cofactor.

Its subcellular location is the secreted. The catalysed reaction is [(1-&gt;4)-beta-D-glucosyl]n+m + reduced acceptor + O2 = 4-dehydro-beta-D-glucosyl-[(1-&gt;4)-beta-D-glucosyl]n-1 + [(1-&gt;4)-beta-D-glucosyl]m + acceptor + H2O.. Its function is as follows. Lytic polysaccharide monooxygenase (LPMO) that depolymerizes crystalline and amorphous polysaccharides via the oxidation of scissile alpha- or beta-(1-4)-glycosidic bonds, yielding C1, C4 as well as C6 oxidation products. Catalysis by LPMOs requires the reduction of the active-site copper from Cu(II) to Cu(I) by a reducing agent and H(2)O(2) or O(2) as a cosubstrate. Active on cellulose, but not on xylan, starch, or chitin. The polypeptide is AA9 family lytic polysaccharide monooxygenase A (Talaromyces pinophilus (Penicillium pinophilum)).